The following is a 523-amino-acid chain: Bifunctional purine biosynthesis protein PurH (523 aa).

Positions 1–154 (MTATAGSNKR…KNHPSVAVVT (154 aa)) constitute an MGS-like domain.

Belongs to the PurH family.

The enzyme catalyses (6R)-10-formyltetrahydrofolate + 5-amino-1-(5-phospho-beta-D-ribosyl)imidazole-4-carboxamide = 5-formamido-1-(5-phospho-D-ribosyl)imidazole-4-carboxamide + (6S)-5,6,7,8-tetrahydrofolate. The catalysed reaction is IMP + H2O = 5-formamido-1-(5-phospho-D-ribosyl)imidazole-4-carboxamide. Its pathway is purine metabolism; IMP biosynthesis via de novo pathway; 5-formamido-1-(5-phospho-D-ribosyl)imidazole-4-carboxamide from 5-amino-1-(5-phospho-D-ribosyl)imidazole-4-carboxamide (10-formyl THF route): step 1/1. It functions in the pathway purine metabolism; IMP biosynthesis via de novo pathway; IMP from 5-formamido-1-(5-phospho-D-ribosyl)imidazole-4-carboxamide: step 1/1. In Streptomyces coelicolor (strain ATCC BAA-471 / A3(2) / M145), this protein is Bifunctional purine biosynthesis protein PurH.